Consider the following 1354-residue polypeptide: Ubiquitin carboxyl-terminal hydrolase 47 (1354 aa).

Residues 114 to 133 (EQPQLASDESGTADSSGLDD) are compositionally biased toward polar residues. The disordered stretch occupies residues 114 to 139 (EQPQLASDESGTADSSGLDDSTQEKF). A USP domain is found at 174–549 (VGLVNQAMTC…NAYMLMYRLK (376 aa)). Cysteine 183 (nucleophile) is an active-site residue. The tract at residues 408-438 (DVEDEKSPQTDSCTDSGAENEGSCHSDQMSN) is disordered. Residues 416–438 (QTDSCTDSGAENEGSCHSDQMSN) show a composition bias toward polar residues. The active-site Proton acceptor is the histidine 488. A compositionally biased stretch (polar residues) spans 863–882 (LSLQQHQDGGNGDSSKSTEG). Disordered regions lie at residues 863–1004 (LSLQ…ESGK) and 1314–1335 (LAKK…SPRK). Residues 920–930 (PEERSDSDVNN) are compositionally biased toward basic and acidic residues. Residues 933–949 (STSSVDSDILSSSHSSD) are compositionally biased toward low complexity. Residues 977–986 (KANDGKKETW) are compositionally biased toward basic and acidic residues. Over residues 987–1000 (DTAEEDSGTDSEYD) the composition is skewed to acidic residues.

This sequence belongs to the peptidase C19 family. USP47 subfamily.

The protein resides in the cytoplasm. The enzyme catalyses Thiol-dependent hydrolysis of ester, thioester, amide, peptide and isopeptide bonds formed by the C-terminal Gly of ubiquitin (a 76-residue protein attached to proteins as an intracellular targeting signal).. Its function is as follows. Ubiquitin-specific protease that specifically deubiquitinates monoubiquitinated DNA polymerase beta (polb), stabilizing polb thereby playing a role in base-excision repair (BER). In Xenopus tropicalis (Western clawed frog), this protein is Ubiquitin carboxyl-terminal hydrolase 47 (usp47).